A 126-amino-acid chain; its full sequence is Profilin-2 (126 aa).

Ser2 bears the Blocked amino end (Ser) mark. Lys104 is modified (N6,N6,N6-trimethyllysine).

It belongs to the profilin family. In terms of assembly, occurs in many kinds of cells as a complex with monomeric actin in a 1:1 ratio.

It localises to the cytoplasm. The protein localises to the cytoskeleton. Its function is as follows. Binds to actin and affects the structure of the cytoskeleton. At high concentrations, profilin prevents the polymerization of actin, whereas it enhances it at low concentrations. By binding to PIP2, it inhibits the formation of IP3 and DG. The polypeptide is Profilin-2 (Acanthamoeba castellanii (Amoeba)).